Here is a 382-residue protein sequence, read N- to C-terminus: ATP phosphoribosyltransferase regulatory subunit (382 aa).

It belongs to the class-II aminoacyl-tRNA synthetase family. HisZ subfamily. As to quaternary structure, heteromultimer composed of HisG and HisZ subunits.

It is found in the cytoplasm. It functions in the pathway amino-acid biosynthesis; L-histidine biosynthesis; L-histidine from 5-phospho-alpha-D-ribose 1-diphosphate: step 1/9. In terms of biological role, required for the first step of histidine biosynthesis. May allow the feedback regulation of ATP phosphoribosyltransferase activity by histidine. The chain is ATP phosphoribosyltransferase regulatory subunit from Burkholderia multivorans (strain ATCC 17616 / 249).